The primary structure comprises 167 residues: 6,7-dimethyl-8-ribityllumazine synthase (167 aa).

5-amino-6-(D-ribitylamino)uracil is bound by residues phenylalanine 26, 60–62 (AFE), and 89–91 (AVI). 94–95 (ET) provides a ligand contact to (2S)-2-hydroxy-3-oxobutyl phosphate. The active-site Proton donor is histidine 97. Phenylalanine 122 contacts 5-amino-6-(D-ribitylamino)uracil. Arginine 136 serves as a coordination point for (2S)-2-hydroxy-3-oxobutyl phosphate.

Belongs to the DMRL synthase family. Forms an icosahedral capsid composed of 60 subunits, arranged as a dodecamer of pentamers.

It carries out the reaction (2S)-2-hydroxy-3-oxobutyl phosphate + 5-amino-6-(D-ribitylamino)uracil = 6,7-dimethyl-8-(1-D-ribityl)lumazine + phosphate + 2 H2O + H(+). It functions in the pathway cofactor biosynthesis; riboflavin biosynthesis; riboflavin from 2-hydroxy-3-oxobutyl phosphate and 5-amino-6-(D-ribitylamino)uracil: step 1/2. Catalyzes the formation of 6,7-dimethyl-8-ribityllumazine by condensation of 5-amino-6-(D-ribitylamino)uracil with 3,4-dihydroxy-2-butanone 4-phosphate. This is the penultimate step in the biosynthesis of riboflavin. In Vesicomyosocius okutanii subsp. Calyptogena okutanii (strain HA), this protein is 6,7-dimethyl-8-ribityllumazine synthase.